Here is a 157-residue protein sequence, read N- to C-terminus: Large ribosomal subunit protein uL11 (157 aa).

It belongs to the universal ribosomal protein uL11 family. In terms of assembly, part of the ribosomal stalk of the 50S ribosomal subunit. Interacts with L10 and the large rRNA to form the base of the stalk. L10 forms an elongated spine to which L12 dimers bind in a sequential fashion forming a multimeric L10(L12)X complex.

Its function is as follows. Forms part of the ribosomal stalk which helps the ribosome interact with GTP-bound translation factors. In Methanocorpusculum labreanum (strain ATCC 43576 / DSM 4855 / Z), this protein is Large ribosomal subunit protein uL11.